The primary structure comprises 450 residues: IMP-specific 5'-nucleotidase 1 (450 aa).

Residue His-144 participates in ATP binding. Asp-172 functions as the Nucleophile in the catalytic mechanism. Residues Asp-172, Asp-174, Asp-180, Thr-208, Asp-376, and Lys-384 each coordinate IMP. Mg(2+)-binding residues include Asp-172 and Asp-174. Asp-174 serves as the catalytic Proton donor. Asp-411 contacts Mg(2+).

It belongs to the ISN1 family. Homotetramer. The cofactor is Mg(2+).

The enzyme catalyses IMP + H2O = inosine + phosphate. Allosterically activated by ATP. ATP binding is a prerequisite to magnesium and substrate binding. ATP binds to 2 of the subunits in the homotetramer inducing a closure of these 2 subunits and the release of the C-terminal loop, thereby activating the enzyme. In terms of biological role, IMP-specific 5'-nucleotidase involved in IMP (inosine 5'-phosphate) degradation. In Saccharomyces cerevisiae (strain ATCC 204508 / S288c) (Baker's yeast), this protein is IMP-specific 5'-nucleotidase 1 (ISN1).